Here is a 254-residue protein sequence, read N- to C-terminus: NH(3)-dependent NAD(+) synthetase (254 aa).

An ATP-binding site is contributed by 29-36; the sequence is GLSGGIDS. Residue Asp-35 participates in Mg(2+) binding. A deamido-NAD(+)-binding site is contributed by Arg-115. ATP is bound at residue Thr-135. Glu-140 is a binding site for Mg(2+). Lys-148 and Asp-155 together coordinate deamido-NAD(+). ATP-binding residues include Lys-164 and Ser-186. 245–246 lines the deamido-NAD(+) pocket; the sequence is HK.

The protein belongs to the NAD synthetase family. Homodimer.

It catalyses the reaction deamido-NAD(+) + NH4(+) + ATP = AMP + diphosphate + NAD(+) + H(+). The protein operates within cofactor biosynthesis; NAD(+) biosynthesis; NAD(+) from deamido-NAD(+) (ammonia route): step 1/1. In terms of biological role, catalyzes the ATP-dependent amidation of deamido-NAD to form NAD. Uses ammonia as a nitrogen source. The chain is NH(3)-dependent NAD(+) synthetase from Methanococcus aeolicus (strain ATCC BAA-1280 / DSM 17508 / OCM 812 / Nankai-3).